A 547-amino-acid chain; its full sequence is Nitrate transporter 2.1 (547 aa).

The next 12 helical transmembrane spans lie at 53-73 (WICFFMSFVATFAPASLAPII), 86-106 (NAGVAAVCGAIAARIFMGIVV), 113-133 (YGAAATMLMTAPAVFCMALVT), 143-163 (FFIGLSLCMFVCCQFWCGTMF), 173-193 (AIAAGWGNMGGGACHFIMPLI), 211-231 (AFFVPGGIYILTATLTLLLGI), 262-280 (LGNYRSWILALTYGYSFGV), 296-316 (FGLNLAVAGALGAIFGLMNLF), 338-358 (IWALWIIQTLGGIFCIVLGKV), 366-386 (IVIMIVFSIFCQQACGLHFGI), 400-420 (GLVGAGGNTGAAITQAIWFAG), and 433-453 (GFVYMGIMTIGLTLPLFFIWF).

The protein belongs to the major facilitator superfamily. Nitrate/nitrite porter (TC 2.A.1.8) family.

The protein resides in the cell membrane. With respect to regulation, nitrite transport mediated by system 1 is very sensitive to inhibition by nitrate. Its function is as follows. Involved in nitrate transport, but does not seem to be able to mediate transport by its own. Acts as a dual component transporter with NAR2 (system 1). Imports nitrate with high affinity when expressed with NAR2 in a heterologous system (Xenopus oocytes). Involved in a high affinity and a high capacity transport specific for both nitrate and nitrite. The polypeptide is Nitrate transporter 2.1 (Chlamydomonas reinhardtii (Chlamydomonas smithii)).